The sequence spans 390 residues: Tumor susceptibility gene 101 protein (390 aa).

Ala-2 bears the N-acetylalanine mark. The UEV domain maps to 2 to 145; that stretch reads AVSESQLKKM…GDEPPVFSRP (144 aa). The tract at residues 158-162 is interaction with CEP55; the sequence is PPNTS. A compositionally biased stretch (polar residues) spans 198–214; that stretch reads ATTSSQYPSQPPVTTVG. Residues 198–220 are disordered; it reads ATTSSQYPSQPPVTTVGPSRDGT. A Phosphothreonine modification is found at Thr-220. A coiled-coil region spans residues 235 to 316; it reads SDKLRWRMKE…NQSENNDIDE (82 aa). A PTAP motif motif is present at residues 320 to 323; it reads PTAP. Residues 322–390 enclose the SB domain; that stretch reads APLYKQILNL…RKTAGLSDLY (69 aa).

The protein belongs to the ubiquitin-conjugating enzyme family. UEV subfamily. Component of the ESCRT-I complex (endosomal sorting complex required for transport I) which consists of TSG101, VPS28, a VPS37 protein (VPS37A to -D) and MVB12A or MVB12B in a 1:1:1:1 stoichiometry. Interacts with VPS37A, VPS37B and VPS37C. Interacts with DMAP1. Interacts with ubiquitin. Interacts with stathmin, GMCL and AATF. Component of an ESCRT-I complex (endosomal sorting complex required for transport I) which consists of TSG101, VPS28, VPS37A and UBAP1 in a 1:1:1:1 stoichiometry. Interacts with HGS; the interaction mediates the association with the ESCRT-0 complex. Interacts with GGA1 and GGA3. Interacts (via UEV domain) with PDCD6IP/AIP1. Interacts with VPS28, SNF8 and VPS36. Self-associates. Interacts with MVB12A; the association appears to be mediated by the TSG101-VPS37 binary subcomplex. Interacts with VPS37D. Interacts with LRSAM1. Interacts with CEP55; the interaction is required for cytokinesis but not for viral budding. Interacts with PDCD6. Interacts with LITAF. Interacts with MGRN1. Interacts with ARRDC1; recruits TSG101 to the plasma membrane. As to quaternary structure, (Microbial infection) Interacts with HIV-1 p6. In terms of assembly, (Microbial infection) Interacts with human spumavirus Gag. (Microbial infection) Interacts with HTLV-1 Gag. As to quaternary structure, (Microbial infection) Interacts with Ebola virus VP40. In terms of assembly, (Microbial infection) Interacts with EIAV p9; the interaction has been shown in vitro. (Microbial infection) Interacts with Lassa virus protein Z. As to quaternary structure, (Microbial infection) Interacts with hepatitis E virus protein ORF3. Post-translationally, monoubiquitinated at multiple sites by LRSAM1 and by MGRN1. Ubiquitination inactivates it, possibly by regulating its shuttling between an active membrane-bound protein and an inactive soluble form. Ubiquitination by MGRN1 requires the presence of UBE2D1. Heart, brain, placenta, lung, liver, skeletal, kidney and pancreas.

The protein localises to the cytoplasm. The protein resides in the early endosome membrane. Its subcellular location is the late endosome membrane. It is found in the cytoskeleton. It localises to the microtubule organizing center. The protein localises to the centrosome. The protein resides in the midbody. Its subcellular location is the midbody ring. It is found in the nucleus. Component of the ESCRT-I complex, a regulator of vesicular trafficking process. Binds to ubiquitinated cargo proteins and is required for the sorting of endocytic ubiquitinated cargos into multivesicular bodies (MVBs). Mediates the association between the ESCRT-0 and ESCRT-I complex. Required for completion of cytokinesis; the function requires CEP55. May be involved in cell growth and differentiation. Acts as a negative growth regulator. Involved in the budding of many viruses through an interaction with viral proteins that contain a late-budding motif P-[ST]-A-P. This interaction is essential for viral particle budding of numerous retroviruses. Required for the exosomal release of SDCBP, CD63 and syndecan. It may also play a role in the extracellular release of microvesicles that differ from the exosomes. This chain is Tumor susceptibility gene 101 protein (TSG101), found in Homo sapiens (Human).